The primary structure comprises 223 residues: Ribose-5-phosphate isomerase A (223 aa).

Residues 28–31, 81–84, and 94–97 each bind substrate; these read TGST, DGAD, and KGGG. The active-site Proton acceptor is Glu103. Lys121 is a binding site for substrate.

It belongs to the ribose 5-phosphate isomerase family. As to quaternary structure, homodimer.

It carries out the reaction aldehydo-D-ribose 5-phosphate = D-ribulose 5-phosphate. The protein operates within carbohydrate degradation; pentose phosphate pathway; D-ribose 5-phosphate from D-ribulose 5-phosphate (non-oxidative stage): step 1/1. Its function is as follows. Catalyzes the reversible conversion of ribose-5-phosphate to ribulose 5-phosphate. In Janthinobacterium sp. (strain Marseille) (Minibacterium massiliensis), this protein is Ribose-5-phosphate isomerase A.